The chain runs to 124 residues: Small ribosomal subunit protein uS12 (124 aa).

Residues 105–124 are disordered; it reads SGVNDRRQGRSKYGAKRPKS. A compositionally biased stretch (basic residues) spans 113-124; sequence GRSKYGAKRPKS.

It belongs to the universal ribosomal protein uS12 family. In terms of assembly, part of the 30S ribosomal subunit. Contacts proteins S8 and S17. May interact with IF1 in the 30S initiation complex.

In terms of biological role, with S4 and S5 plays an important role in translational accuracy. Interacts with and stabilizes bases of the 16S rRNA that are involved in tRNA selection in the A site and with the mRNA backbone. Located at the interface of the 30S and 50S subunits, it traverses the body of the 30S subunit contacting proteins on the other side and probably holding the rRNA structure together. The combined cluster of proteins S8, S12 and S17 appears to hold together the shoulder and platform of the 30S subunit. The chain is Small ribosomal subunit protein uS12 from Idiomarina loihiensis (strain ATCC BAA-735 / DSM 15497 / L2-TR).